The sequence spans 202 residues: NADH-quinone oxidoreductase subunit C (202 aa).

The protein belongs to the complex I 30 kDa subunit family. As to quaternary structure, NDH-1 is composed of 14 different subunits. Subunits NuoB, C, D, E, F, and G constitute the peripheral sector of the complex.

It localises to the cell inner membrane. The catalysed reaction is a quinone + NADH + 5 H(+)(in) = a quinol + NAD(+) + 4 H(+)(out). In terms of biological role, NDH-1 shuttles electrons from NADH, via FMN and iron-sulfur (Fe-S) centers, to quinones in the respiratory chain. The immediate electron acceptor for the enzyme in this species is believed to be ubiquinone. Couples the redox reaction to proton translocation (for every two electrons transferred, four hydrogen ions are translocated across the cytoplasmic membrane), and thus conserves the redox energy in a proton gradient. This chain is NADH-quinone oxidoreductase subunit C, found in Hyphomonas neptunium (strain ATCC 15444).